We begin with the raw amino-acid sequence, 865 residues long: Alanine--tRNA ligase (865 aa).

Residues histidine 554, histidine 558, cysteine 656, and histidine 660 each coordinate Zn(2+).

It belongs to the class-II aminoacyl-tRNA synthetase family. Requires Zn(2+) as cofactor.

It localises to the cytoplasm. The enzyme catalyses tRNA(Ala) + L-alanine + ATP = L-alanyl-tRNA(Ala) + AMP + diphosphate. In terms of biological role, catalyzes the attachment of alanine to tRNA(Ala) in a two-step reaction: alanine is first activated by ATP to form Ala-AMP and then transferred to the acceptor end of tRNA(Ala). Also edits incorrectly charged Ser-tRNA(Ala) and Gly-tRNA(Ala) via its editing domain. This chain is Alanine--tRNA ligase, found in Francisella tularensis subsp. tularensis (strain WY96-3418).